Consider the following 469-residue polypeptide: DNA repair and recombination protein rad22 (469 aa).

The disordered stretch occupies residues 265 to 296 (PAANNHHSEKAGTQINNKDKGSHNSAKPVQRS). Positions 287-296 (HNSAKPVQRS) are enriched in polar residues. Residues Ser296 and Ser319 each carry the phosphoserine modification. Residues 429–469 (LHDSTTSHNKSDLMRTNSDPQSAMRSRENYDATVDKKAKKG) are disordered. Polar residues predominate over residues 431–452 (DSTTSHNKSDLMRTNSDPQSAM). Positions 453-469 (RSRENYDATVDKKAKKG) are enriched in basic and acidic residues.

This sequence belongs to the RAD52 family. As to quaternary structure, interacts with rhp51.

The protein localises to the nucleus. In terms of biological role, active in the repair of DNA damage and in mating-type switching. Probably involved in the repair of DNA double-strands breaks. Has a role in promoting S phase completion. This is DNA repair and recombination protein rad22 (rad22) from Schizosaccharomyces pombe (strain 972 / ATCC 24843) (Fission yeast).